Reading from the N-terminus, the 358-residue chain is tRNA-specific 2-thiouridylase MnmA (358 aa).

ATP-binding positions include 10 to 17 and methionine 36; that span reads AMSGGVDS. The active-site Nucleophile is cysteine 105. An intrachain disulfide couples cysteine 105 to cysteine 202. Residue glycine 129 participates in ATP binding. The interval 152–154 is interaction with tRNA; the sequence is KDQ. Residue cysteine 202 is the Cysteine persulfide intermediate of the active site. Residues 308–309 form an interaction with tRNA region; sequence RY.

This sequence belongs to the MnmA/TRMU family.

It is found in the cytoplasm. It carries out the reaction S-sulfanyl-L-cysteinyl-[protein] + uridine(34) in tRNA + AH2 + ATP = 2-thiouridine(34) in tRNA + L-cysteinyl-[protein] + A + AMP + diphosphate + H(+). In terms of biological role, catalyzes the 2-thiolation of uridine at the wobble position (U34) of tRNA, leading to the formation of s(2)U34. The protein is tRNA-specific 2-thiouridylase MnmA of Magnetococcus marinus (strain ATCC BAA-1437 / JCM 17883 / MC-1).